The following is a 244-amino-acid chain: ATP synthase subunit O, mitochondrial (244 aa).

A mitochondrion-targeting transit peptide spans 1–45 (MAMTGRARSMGFSILQKALSSAQRSNAHRSILCPTLSNSELLRNY).

Belongs to the ATPase delta chain family. F-type ATPases have 2 components, CF(1) - the catalytic core - and CF(0) - the membrane proton channel. CF(1) has five subunits: alpha(3), beta(3), gamma(1), delta(1), epsilon(1). CF(0) has three main subunits: a, b and c.

Its subcellular location is the mitochondrion. The protein localises to the mitochondrion inner membrane. Functionally, mitochondrial membrane ATP synthase (F(1)F(0) ATP synthase or Complex V) produces ATP from ADP in the presence of a proton gradient across the membrane which is generated by electron transport complexes of the respiratory chain. F-type ATPases consist of two structural domains, F(1) - containing the extramembraneous catalytic core and F(0) - containing the membrane proton channel, linked together by a central stalk and a peripheral stalk. During catalysis, ATP synthesis in the catalytic domain of F(1) is coupled via a rotary mechanism of the central stalk subunits to proton translocation. Part of the complex F(0) domain and the peripheric stalk, which acts as a stator to hold the catalytic alpha(3)beta(3) subcomplex and subunit a/ATP6 static relative to the rotary elements. This Ipomoea batatas (Sweet potato) protein is ATP synthase subunit O, mitochondrial.